A 420-amino-acid polypeptide reads, in one-letter code: MGSSEPIPIAESDKRKKKKRKARATDSLPGKFEDVYKLTSELLGEGANAKVQVAVSLQNGNEYAVKIIEKHAGHSRSRVFREVETLYQCQGNKHILELIEFFEDDTRFYLVFEKLQGGSILAHIQKQKHFNEREASRVVRDVAAALDFRHTKGIAHRDLKPENILCESPEKVSPVKICDFDLGSGVKLNNSCTPITTPELTTPCGSAEYMAPEVVEVFTDEATFYDKRCDLWSLGVVLYIMLSGYPPFVGHCGADCGWDRGEVCTVCQNKLFESIQKGKYEFPDKDWAHISNEAKDLISKLLVRDAKQRLSAAQVLQHPWVQGQAPERGLPTPQVLQRNSSTMDLTLFAAEAIALNRQLSQHEENEQNKLAEESEVLAEGLCSVKLSPPSKSRLARRRALAQAGRSGDAPPSPTPTTPAP.

Positions 1–25 (MGSSEPIPIAESDKRKKKKRKARAT) are disordered. At serine 27 the chain carries Phosphoserine; by PAK2. Residues 37 to 321 (KLTSELLGEG…AAQVLQHPWV (285 aa)) enclose the Protein kinase domain. Residues 43-51 (LGEGANAKV) and lysine 66 each bind ATP. Catalysis depends on aspartate 158, which acts as the Proton acceptor. 2 positions are modified to phosphoserine: serine 168 and serine 173. Phosphothreonine is present on residues threonine 197, threonine 202, and threonine 332. Residues 386-420 (LSPPSKSRLARRRALAQAGRSGDAPPSPTPTTPAP) are disordered. Residues 400–409 (LAQAGRSGDA) show a composition bias toward low complexity. Residues 410–420 (PPSPTPTTPAP) are compositionally biased toward pro residues.

It belongs to the protein kinase superfamily. CAMK Ser/Thr protein kinase family. Interacts with the C-terminal regions of EIF4G1 and EIF4G2. Also binds to dephosphorylated ERK1 and ERK2, and to the p38 kinases. It depends on Mg(2+) as a cofactor. In terms of processing, dual phosphorylation of Thr-197 and Thr-202 activates the kinase. Phosphorylation of Thr-332 activates the kinase. MAPK3/ERK1 is one of the kinases which activate MKNK1/MNK1. Phosphorylation by PAK2 leads to a reduced phosphorylation of EIF4G1.

It catalyses the reaction L-seryl-[protein] + ATP = O-phospho-L-seryl-[protein] + ADP + H(+). The catalysed reaction is L-threonyl-[protein] + ATP = O-phospho-L-threonyl-[protein] + ADP + H(+). Phosphorylated and activated by the p38 kinases and kinases in the Erk pathway. May play a role in the response to environmental stress and cytokines. Appears to regulate translation by phosphorylating EIF4E, thus increasing the affinity of this protein for the 7-methylguanosine-containing mRNA cap. The chain is MAP kinase-interacting serine/threonine-protein kinase 1 (MKNK1) from Bos taurus (Bovine).